A 121-amino-acid polypeptide reads, in one-letter code: Large ribosomal subunit protein bL17 (121 aa).

This sequence belongs to the bacterial ribosomal protein bL17 family. In terms of assembly, part of the 50S ribosomal subunit. Contacts protein L32.

The chain is Large ribosomal subunit protein bL17 from Sulfurihydrogenibium sp. (strain YO3AOP1).